A 179-amino-acid chain; its full sequence is Large ribosomal subunit protein uL6 (179 aa).

The protein belongs to the universal ribosomal protein uL6 family. Part of the 50S ribosomal subunit.

In terms of biological role, this protein binds to the 23S rRNA, and is important in its secondary structure. It is located near the subunit interface in the base of the L7/L12 stalk, and near the tRNA binding site of the peptidyltransferase center. The polypeptide is Large ribosomal subunit protein uL6 (Streptomyces griseus subsp. griseus (strain JCM 4626 / CBS 651.72 / NBRC 13350 / KCC S-0626 / ISP 5235)).